A 565-amino-acid chain; its full sequence is DNA primase (565 aa).

The CHC2-type zinc-finger motif lies at 37-61; the sequence is CPFHSETNPSFYVHPGLKIYHCFGC. A Toprim domain is found at 248–329; that stretch reads GFFVITEGYF…NVLVATPSPY (82 aa). Mg(2+) contacts are provided by Glu254, Asp298, and Asp300.

This sequence belongs to the DnaG primase family. Monomer. Interacts with DnaB. Zn(2+) serves as cofactor. The cofactor is Mg(2+).

It catalyses the reaction ssDNA + n NTP = ssDNA/pppN(pN)n-1 hybrid + (n-1) diphosphate.. RNA polymerase that catalyzes the synthesis of short RNA molecules used as primers for DNA polymerase during DNA replication. The polypeptide is DNA primase (Thermotoga maritima (strain ATCC 43589 / DSM 3109 / JCM 10099 / NBRC 100826 / MSB8)).